The sequence spans 87 residues: U24 protein (87 aa).

Threonine 6 bears the Phosphothreonine mark. A PPXY motif motif is present at residues 8 to 11 (PPSY). A helical membrane pass occupies residues 59 to 79 (FLVLTGLAIAMILFIVFVLYV).

As to quaternary structure, interacts with host ITCH; this interaction probably mediates ITCH degradation. Interacts probably with NEDD4.

The protein resides in the membrane. In terms of biological role, down-regulates the TCR/CD3E complex and the transferrin receptor TFRC in host T-cells by blocking them from recycling back to the cell surface. The protein is U24 protein (U24) of Homo sapiens (Human).